Consider the following 652-residue polypeptide: Beta-glucuronidase (652 aa).

The N-terminal stretch at 1–22 (MVRGPAGAWAVLGPLLWGCGLA) is a signal peptide. Residues Asn-173 and Asn-420 are each glycosylated (N-linked (GlcNAc...) asparagine). The Proton donor role is filled by Glu-451. Residue Asn-631 is glycosylated (N-linked (GlcNAc...) asparagine).

It belongs to the glycosyl hydrolase 2 family. As to quaternary structure, homotetramer.

It localises to the lysosome. It carries out the reaction a beta-D-glucuronoside + H2O = D-glucuronate + an alcohol. With respect to regulation, inhibited by L-aspartic acid. Its function is as follows. Plays an important role in the degradation of dermatan and keratan sulfates. The polypeptide is Beta-glucuronidase (GUSB) (Sus scrofa (Pig)).